Reading from the N-terminus, the 315-residue chain is MNAVTNGESREILLVAHPGRRDITETAKRVGKIFERAGIGLRVLVDEADSSRIEAMTEPEGFSAPGLDVTVVHPGPDAAVGCELVLVLGGDGTFLRAAELAQEASIPVLGINLGRIGFLAETEAEHLDEALAQVVRKEYRVESRMTLDVVIRVDDEIIDRGWALNEASIENRSRLGVLEVVLEVDGRPVSAFGCDGVLVSTPTGSTAYAFSAGGPVVWPELEALLVVPSNAHALFARPLVTSPNSIIAVETVAGSHDGLVFCDGRRTLELPAGARVEIVRGATPVKWVRLDSAPFADRMVRKFELPVTGWRGRKP.

Residue Asp91 is the Proton acceptor of the active site. NAD(+) contacts are provided by residues 91-92 (DG), Arg96, 165-166 (NE), Asp195, and 206-211 (TAYAFS).

This sequence belongs to the NAD kinase family. The cofactor is a divalent metal cation.

The protein resides in the cytoplasm. It catalyses the reaction NAD(+) + ATP = ADP + NADP(+) + H(+). In terms of biological role, involved in the regulation of the intracellular balance of NAD and NADP, and is a key enzyme in the biosynthesis of NADP. Catalyzes specifically the phosphorylation on 2'-hydroxyl of the adenosine moiety of NAD to yield NADP. The polypeptide is NAD kinase (Rhodococcus erythropolis (strain PR4 / NBRC 100887)).